We begin with the raw amino-acid sequence, 227 residues long: Flagellar L-ring protein (227 aa).

An N-terminal signal peptide occupies residues 1-16 (MRNIILFAAGTLLLSG). Residue cysteine 17 is the site of N-palmitoyl cysteine attachment. A lipid anchor (S-diacylglycerol cysteine) is attached at cysteine 17.

Belongs to the FlgH family. In terms of assembly, the basal body constitutes a major portion of the flagellar organelle and consists of four rings (L,P,S, and M) mounted on a central rod.

The protein resides in the cell outer membrane. Its subcellular location is the bacterial flagellum basal body. In terms of biological role, assembles around the rod to form the L-ring and probably protects the motor/basal body from shearing forces during rotation. The sequence is that of Flagellar L-ring protein from Pseudoalteromonas translucida (strain TAC 125).